A 592-amino-acid polypeptide reads, in one-letter code: Autophagy-related protein 22-1 (592 aa).

A run of 4 helical transmembrane segments spans residues 31–51 (YGWAAEVFVVCAMGSFLPITL), 108–128 (TASFALYTFSLSVLVQAVIII), 143–163 (LLIVFAFIGSIATMLFLVVVP), and 167–187 (LLGGLLAIISNTCFGASFVLL). An N-linked (GlcNAc...) asparagine glycan is attached at Asn213. 8 helical membrane passes run 271 to 291 (IGIGYIGAVILQVISILVVVV), 301 to 321 (LVLFLIGLWWFVFTIPASLWL), 364 to 384 (IVIFLAAWFLLSDGIATVSGT), 398 to 418 (AALGLINVIVMLAGVFGAFSW), 433 to 453 (IIACIILFELIPLYGLLGFIP), 468 to 490 (MYPLGALYGLVMGGLSSYCRSFF), 502 to 524 (FYALYAITDKGSSIFGPAIVGAI), and 534 to 554 (AFVFLAVLIFVPLPLMLLVDV). A disordered region spans residues 572-592 (PQGSEYGAISDDQTTEDPIEE).

It belongs to the ATG22 family.

It is found in the vacuole membrane. Its function is as follows. Vacuolar effluxer which mediate the efflux of amino acids resulting from autophagic degradation. The release of autophagic amino acids allows the maintenance of protein synthesis and viability during nitrogen starvation. In Penicillium rubens (strain ATCC 28089 / DSM 1075 / NRRL 1951 / Wisconsin 54-1255) (Penicillium chrysogenum), this protein is Autophagy-related protein 22-1 (atg22-1).